Here is a 315-residue protein sequence, read N- to C-terminus: Methionyl-tRNA formyltransferase (315 aa).

113-116 contributes to the (6S)-5,6,7,8-tetrahydrofolate binding site; it reads SLLP.

It belongs to the Fmt family.

It catalyses the reaction L-methionyl-tRNA(fMet) + (6R)-10-formyltetrahydrofolate = N-formyl-L-methionyl-tRNA(fMet) + (6S)-5,6,7,8-tetrahydrofolate + H(+). Functionally, attaches a formyl group to the free amino group of methionyl-tRNA(fMet). The formyl group appears to play a dual role in the initiator identity of N-formylmethionyl-tRNA by promoting its recognition by IF2 and preventing the misappropriation of this tRNA by the elongation apparatus. The sequence is that of Methionyl-tRNA formyltransferase from Shigella sonnei (strain Ss046).